A 297-amino-acid polypeptide reads, in one-letter code: N-acetylneuraminate lyase (297 aa).

Residues Ser-47 and Thr-48 each coordinate aceneuramate. The active-site Proton donor is the Tyr-137. Lys-165 serves as the catalytic Schiff-base intermediate with substrate. The aceneuramate site is built by Thr-167, Gly-189, Asp-191, Glu-192, and Ser-208.

It belongs to the DapA family. NanA subfamily. As to quaternary structure, homotetramer.

It localises to the cytoplasm. The catalysed reaction is aceneuramate = aldehydo-N-acetyl-D-mannosamine + pyruvate. Its pathway is amino-sugar metabolism; N-acetylneuraminate degradation; D-fructose 6-phosphate from N-acetylneuraminate: step 1/5. Its function is as follows. Catalyzes the reversible aldol cleavage of N-acetylneuraminic acid (sialic acid; Neu5Ac) to form pyruvate and N-acetylmannosamine (ManNAc) via a Schiff base intermediate. This is N-acetylneuraminate lyase from Salmonella paratyphi A (strain AKU_12601).